The primary structure comprises 55 residues: AYKITDGCINCGACEPECPVEAISESDAVRVIDADKCIDCGACANTCPVDAIVEG.

2 4Fe-4S ferredoxin-type domains span residues Y2 to D27 and A28 to G55. Residues C8, C11, C14, C18, C37, C40, C43, and C47 each contribute to the [4Fe-4S] cluster site.

[4Fe-4S] cluster is required as a cofactor.

In terms of biological role, ferredoxins are iron-sulfur proteins that transfer electrons in a wide variety of metabolic reactions. The protein is Ferredoxin of Clostridium sp. (strain M-E).